An 87-amino-acid chain; its full sequence is Antitoxin epsilon (87 aa).

The protein belongs to the epsilon antitoxin family. In the presence of the zeta toxin, forms an inactive PezA(2)PezT(2) heterotetramer.

Its function is as follows. Antitoxin component of a type II toxin-antitoxin (TA) system. Neutralizes the toxic effect of cognate zeta toxin. Part of a postsegregational killing (PSK) system involved in the killing of plasmid-free cells. Continuous synthesis of the epsilon antitoxin is required to counteract the zeta toxin. This chain is Antitoxin epsilon, found in Lactococcus lactis subsp. lactis (Streptococcus lactis).